Consider the following 261-residue polypeptide: Probable membrane transporter protein XF_0764 (261 aa).

The next 8 helical transmembrane spans lie at 6 to 26 (LIVT…LGGG), 29 to 49 (ILAT…IAIG), 78 to 98 (VIFA…GMLI), 99 to 119 (DGQR…LLML), 150 to 170 (AASG…LIFA), 175 to 195 (TINA…ITTL), 205 to 225 (WTIA…GTLL), and 239 to 259 (VFGL…WASL).

Belongs to the 4-toluene sulfonate uptake permease (TSUP) (TC 2.A.102) family.

The protein resides in the cell membrane. The polypeptide is Probable membrane transporter protein XF_0764 (Xylella fastidiosa (strain 9a5c)).